The chain runs to 1026 residues: P3N-PIPO polyprotein (1026 aa).

The Peptidase S30 domain occupies 165–308 (RMSEASLQLF…KEQSNEIVHY (144 aa)). Catalysis depends on for P1 proteinase activity residues His216, Asp225, and Ser259. An Involved in interaction with stylet and aphid transmission motif is present at residues 360–363 (KITC). The short motif at 618–620 (PTK) is the Involved in virions binding and aphid transmission element. Residues 644-766 (MFIAKAGYCY…DSSMKTYLVG (123 aa)) form the Peptidase C6 domain. Catalysis depends on for helper component proteinase activity residues Cys652 and His725.

Belongs to the potyviridae P3N-PIPO polyprotein family. Interacts (via PIPO domain) with host PCaP1 protein; this interaction may help to anchor the movement complex to the plasma membrane from which the complex could move to the plasmodesmata. Post-translationally, potyviral RNA is expressed as two polyproteins which undergo post-translational proteolytic processing. Genome polyprotein is processed by NIa-pro, P1 and HC-pro proteinases resulting in the production of at least ten individual proteins. P3N-PIPO is cleaved by P1 and HC-pro proteinases resulting in the production of three individual proteins. The P1 proteinase and the HC-pro cleave only their respective C-termini autocatalytically.

The protein resides in the host cell junction. The protein localises to the host plasmodesma. The catalysed reaction is Hydrolyzes a Gly-|-Gly bond at its own C-terminus, commonly in the sequence -Tyr-Xaa-Val-Gly-|-Gly, in the processing of the potyviral polyprotein.. In terms of biological role, required for aphid transmission and also has proteolytic activity. Only cleaves a Gly-Gly dipeptide at its own C-terminus. Interacts with virions and aphid stylets. Acts as a suppressor of RNA-mediated gene silencing, also known as post-transcriptional gene silencing (PTGS), a mechanism of plant viral defense that limits the accumulation of viral RNAs. May have RNA-binding activity. Allows efficient cell to cell propagation, by bypassing the host cell wall barrier. Transports viral genome to neighboring plant cells directly through plasmosdesmata, without any budding. This chain is P3N-PIPO polyprotein, found in Prunus armeniaca (Apricot).